A 347-amino-acid chain; its full sequence is Protein RecA (347 aa).

80–87 contributes to the ATP binding site; sequence GPESSGKT.

It belongs to the RecA family.

The protein resides in the cytoplasm. Functionally, can catalyze the hydrolysis of ATP in the presence of single-stranded DNA, the ATP-dependent uptake of single-stranded DNA by duplex DNA, and the ATP-dependent hybridization of homologous single-stranded DNAs. It interacts with LexA causing its activation and leading to its autocatalytic cleavage. The protein is Protein RecA of Chlorobaculum parvum (strain DSM 263 / NCIMB 8327) (Chlorobium vibrioforme subsp. thiosulfatophilum).